The sequence spans 185 residues: Probable RNA 2'-phosphotransferase (185 aa).

Belongs to the KptA/TPT1 family.

Functionally, removes the 2'-phosphate from RNA via an intermediate in which the phosphate is ADP-ribosylated by NAD followed by a presumed transesterification to release the RNA and generate ADP-ribose 1''-2''-cyclic phosphate (APPR&gt;P). May function as an ADP-ribosylase. This is Probable RNA 2'-phosphotransferase from Bacillus thuringiensis subsp. konkukian (strain 97-27).